A 499-amino-acid chain; its full sequence is Pyruvate kinase 1 (499 aa).

Substrate is bound at residue Arg-50. Asn-52, Ser-54, Asp-84, and Thr-85 together coordinate K(+). Asn-52–His-55 provides a ligand contact to ATP. Position 91 (Arg-91) interacts with ATP. Glu-241 contributes to the Mg(2+) binding site. Positions 264, 265, and 297 each coordinate substrate. Asp-265 serves as a coordination point for Mg(2+).

This sequence belongs to the pyruvate kinase family. As to quaternary structure, homotetramer. It depends on Mg(2+) as a cofactor. K(+) is required as a cofactor.

It carries out the reaction pyruvate + ATP = phosphoenolpyruvate + ADP + H(+). The protein operates within carbohydrate degradation; glycolysis; pyruvate from D-glyceraldehyde 3-phosphate: step 5/5. Activated by fructose 2,6-bisphosphate, activated by the effector in a cooperative manner. In Trypanosoma brucei brucei, this protein is Pyruvate kinase 1 (PYK1).